A 284-amino-acid polypeptide reads, in one-letter code: Formamidopyrimidine-DNA glycosylase (284 aa).

Proline 2 (schiff-base intermediate with DNA) is an active-site residue. Glutamate 3 functions as the Proton donor in the catalytic mechanism. The Proton donor; for beta-elimination activity role is filled by lysine 59. Positions 94 and 113 each coordinate DNA. The FPG-type zinc finger occupies 239–273 (KVHTKKDQPCSVCNQLIVKKKINGRGSYFCLNCQK). The active-site Proton donor; for delta-elimination activity is the arginine 263.

Belongs to the FPG family. As to quaternary structure, monomer. Zn(2+) serves as cofactor.

It carries out the reaction Hydrolysis of DNA containing ring-opened 7-methylguanine residues, releasing 2,6-diamino-4-hydroxy-5-(N-methyl)formamidopyrimidine.. The enzyme catalyses 2'-deoxyribonucleotide-(2'-deoxyribose 5'-phosphate)-2'-deoxyribonucleotide-DNA = a 3'-end 2'-deoxyribonucleotide-(2,3-dehydro-2,3-deoxyribose 5'-phosphate)-DNA + a 5'-end 5'-phospho-2'-deoxyribonucleoside-DNA + H(+). Involved in base excision repair of DNA damaged by oxidation or by mutagenic agents. Acts as a DNA glycosylase that recognizes and removes damaged bases. Has a preference for oxidized purines, such as 7,8-dihydro-8-oxoguanine (8-oxoG). Has AP (apurinic/apyrimidinic) lyase activity and introduces nicks in the DNA strand. Cleaves the DNA backbone by beta-delta elimination to generate a single-strand break at the site of the removed base with both 3'- and 5'-phosphates. The polypeptide is Formamidopyrimidine-DNA glycosylase (mutM) (Mycoplasma genitalium (strain ATCC 33530 / DSM 19775 / NCTC 10195 / G37) (Mycoplasmoides genitalium)).